Here is a 165-residue protein sequence, read N- to C-terminus: Endoribonuclease YbeY (165 aa).

The Zn(2+) site is built by His-119, His-123, and His-129.

This sequence belongs to the endoribonuclease YbeY family. The cofactor is Zn(2+).

It is found in the cytoplasm. Functionally, single strand-specific metallo-endoribonuclease involved in late-stage 70S ribosome quality control and in maturation of the 3' terminus of the 16S rRNA. This chain is Endoribonuclease YbeY, found in Streptomyces coelicolor (strain ATCC BAA-471 / A3(2) / M145).